A 522-amino-acid polypeptide reads, in one-letter code: Maturase K (522 aa).

It belongs to the intron maturase 2 family. MatK subfamily.

The protein resides in the plastid. It is found in the chloroplast. Usually encoded in the trnK tRNA gene intron. Probably assists in splicing its own and other chloroplast group II introns. The polypeptide is Maturase K (Dianella ensifolia (Flax lily)).